A 784-amino-acid polypeptide reads, in one-letter code: LPS-assembly protein LptD (784 aa).

The N-terminal stretch at 1-24 (MKKRIPTLLATMIATALYSQQGLA) is a signal peptide. 2 cysteine pairs are disulfide-bonded: Cys-31–Cys-724 and Cys-173–Cys-725.

This sequence belongs to the LptD family. In terms of assembly, component of the lipopolysaccharide transport and assembly complex. Interacts with LptE and LptA. Contains two intramolecular disulfide bonds.

The protein localises to the cell outer membrane. Together with LptE, is involved in the assembly of lipopolysaccharide (LPS) at the surface of the outer membrane. This Shigella sonnei (strain Ss046) protein is LPS-assembly protein LptD.